The sequence spans 342 residues: UDP-3-O-acylglucosamine N-acyltransferase (342 aa).

Residue histidine 241 is the Proton acceptor of the active site.

Belongs to the transferase hexapeptide repeat family. LpxD subfamily. In terms of assembly, homotrimer.

The catalysed reaction is a UDP-3-O-[(3R)-3-hydroxyacyl]-alpha-D-glucosamine + a (3R)-hydroxyacyl-[ACP] = a UDP-2-N,3-O-bis[(3R)-3-hydroxyacyl]-alpha-D-glucosamine + holo-[ACP] + H(+). Its pathway is bacterial outer membrane biogenesis; LPS lipid A biosynthesis. Its function is as follows. Catalyzes the N-acylation of UDP-3-O-acylglucosamine using 3-hydroxyacyl-ACP as the acyl donor. Is involved in the biosynthesis of lipid A, a phosphorylated glycolipid that anchors the lipopolysaccharide to the outer membrane of the cell. The chain is UDP-3-O-acylglucosamine N-acyltransferase from Pasteurella multocida (strain Pm70).